Reading from the N-terminus, the 1088-residue chain is TBC1 domain family member 31 (1088 aa).

Residues 1–20 (MQTTDLGNKESGKIWHRKPN) form a disordered region. 7 WD repeats span residues 33-74 (HVDA…LNRN), 75-116 (RFDL…TGAK), 117-157 (ELVS…LDTF), 158-200 (QRKR…SDTL), 201-248 (ACKY…SKQL), 249-296 (FRII…IQTC), and 297-334 (KLVFDIGSHDNGIVTSSVSPNGRYITSVMENGSLNIYS). Residues 356–381 (SKDKDSTGNKSGVSGASQEKVRVSSG) form a disordered region. Polar residues predominate over residues 363–372 (GNKSGVSGAS). Residues 432-607 (EYPAKYRMFI…RLFDNVFSNH (176 aa)) form the Rab-GAP TBC domain. 2 coiled-coil regions span residues 736–903 (QQQE…VETD) and 1048–1076 (RGELENRERALISEVRELRQKLATQARRK).

The protein localises to the cytoplasm. It localises to the cytoskeleton. The protein resides in the microtubule organizing center. It is found in the centrosome. Its subcellular location is the centriolar satellite. The protein localises to the cilium basal body. Functionally, molecular adapter which is involved in cilium biogenesis. Part of a functional complex including OFD1 a centriolar protein involved in cilium assembly. Could regulate the cAMP-dependent phosphorylation of OFD1, and its subsequent ubiquitination by PJA2 which ultimately leads to its proteasomal degradation. The protein is TBC1 domain family member 31 of Xenopus tropicalis (Western clawed frog).